A 357-amino-acid polypeptide reads, in one-letter code: Heat-inducible transcription repressor HrcA (357 aa).

It belongs to the HrcA family.

In terms of biological role, negative regulator of class I heat shock genes (grpE-dnaK-dnaJ and groELS operons). Prevents heat-shock induction of these operons. The protein is Heat-inducible transcription repressor HrcA of Chlorobium limicola (strain DSM 245 / NBRC 103803 / 6330).